The chain runs to 42 residues: Photosystem I reaction center subunit IX (42 aa).

Residues 7–27 traverse the membrane as a helical segment; it reads FLSSAPVLIMALLTFTAGILI.

Belongs to the PsaJ family.

The protein localises to the cellular thylakoid membrane. May help in the organization of the PsaE and PsaF subunits. The sequence is that of Photosystem I reaction center subunit IX from Microcystis aeruginosa (strain NIES-843 / IAM M-2473).